The primary structure comprises 509 residues: ATP synthase subunit alpha (509 aa).

169 to 176 is a binding site for ATP; it reads GDRQTGKT.

It belongs to the ATPase alpha/beta chains family. As to quaternary structure, F-type ATPases have 2 components, CF(1) - the catalytic core - and CF(0) - the membrane proton channel. CF(1) has five subunits: alpha(3), beta(3), gamma(1), delta(1), epsilon(1). CF(0) has three main subunits: a(1), b(2) and c(9-12). The alpha and beta chains form an alternating ring which encloses part of the gamma chain. CF(1) is attached to CF(0) by a central stalk formed by the gamma and epsilon chains, while a peripheral stalk is formed by the delta and b chains.

The protein resides in the cell inner membrane. The catalysed reaction is ATP + H2O + 4 H(+)(in) = ADP + phosphate + 5 H(+)(out). Functionally, produces ATP from ADP in the presence of a proton gradient across the membrane. The alpha chain is a regulatory subunit. The protein is ATP synthase subunit alpha of Methylobacterium sp. (strain 4-46).